Reading from the N-terminus, the 522-residue chain is Ribonuclease Y (522 aa).

The chain crosses the membrane as a helical span at residues 7–23; the sequence is SGSSAAVISGLVGFYIS. The KH domain occupies 212–278; the sequence is LTNLVHLNDD…TKTLELLIQD (67 aa). The region spanning 338-431 is the HD domain; the sequence is ALSHTLEVAH…VCAADALSAA (94 aa).

It belongs to the RNase Y family.

It localises to the cell membrane. In terms of biological role, endoribonuclease that initiates mRNA decay. The protein is Ribonuclease Y of Sulfurimonas denitrificans (strain ATCC 33889 / DSM 1251) (Thiomicrospira denitrificans (strain ATCC 33889 / DSM 1251)).